A 202-amino-acid chain; its full sequence is Small ribosomal subunit protein bS20c (202 aa).

The transit peptide at 1–79 (MATIVQCLSS…KPMRQLIVCE (79 aa)) directs the protein to the chloroplast. Residues 89-110 (SAAKRARQAEKRRVYNKSKKSE) are disordered.

The protein belongs to the bacterial ribosomal protein bS20 family. Part of the 30S ribosomal subunit.

It localises to the plastid. Its subcellular location is the chloroplast. Its function is as follows. Binds directly to 16S ribosomal RNA. This Arabidopsis thaliana (Mouse-ear cress) protein is Small ribosomal subunit protein bS20c (RPS20).